A 610-amino-acid chain; its full sequence is Protein Smaug homolog 1 (610 aa).

A Phosphoserine modification is found at serine 67. Disordered regions lie at residues 177 to 222, 318 to 366, and 464 to 487; these read ARGP…EEGS, SSPS…LQPP, and NRGF…GRRN. One can recognise an SAM domain in the interval 222 to 295; the sequence is SGMKDVPAWL…LKSLERDIIE (74 aa). Serine 319 is subject to Phosphoserine. Threonine 323 is subject to Phosphothreonine. Low complexity predominate over residues 344–358; the sequence is SAATVTSATASASAG. Arginine 465 carries the post-translational modification Omega-N-methylarginine. Residues 467–480 show a composition bias toward polar residues; sequence FGQSNSLPTASSVG. At serine 472 the chain carries Phosphoserine.

This sequence belongs to the SMAUG family. Expressed in brain (at protein level).

The protein resides in the cytoplasm. The protein localises to the cell projection. It is found in the dendrite. Its subcellular location is the synapse. It localises to the synaptosome. Functionally, acts as a translational repressor of SRE-containing messengers. The polypeptide is Protein Smaug homolog 1 (Samd4a) (Rattus norvegicus (Rat)).